The sequence spans 282 residues: Putative 4-diphosphocytidyl-2-C-methyl-D-erythritol kinase (282 aa).

Residue Lys9 is part of the active site. Residue 93–103 (PVSAGLAGGSA) coordinates ATP. Residue Asp135 is part of the active site.

Belongs to the GHMP kinase family. IspE subfamily.

It catalyses the reaction 4-CDP-2-C-methyl-D-erythritol + ATP = 4-CDP-2-C-methyl-D-erythritol 2-phosphate + ADP + H(+). Functionally, catalyzes the phosphorylation of the position 2 hydroxy group of 4-diphosphocytidyl-2C-methyl-D-erythritol. The chain is Putative 4-diphosphocytidyl-2-C-methyl-D-erythritol kinase from Staphylococcus aureus (strain bovine RF122 / ET3-1).